The primary structure comprises 360 residues: DAZ-associated protein 1 (360 aa).

2 consecutive RRM domains span residues Gly10 to Pro97 and Asn114 to Pro191. Disordered regions lie at residues His73–Ile116 and Val184–Phe345. Basic and acidic residues-rich tracts occupy residues Gln91–Arg112 and Val184–Lys195. Over residues Gly203 to Ser231 the composition is skewed to polar residues. Positions Thr242–Gly253 are enriched in gly residues. The span at Gly271–Asp301 shows a compositional bias: pro residues. Polar residues predominate over residues Gln328–Phe345.

Component of a mRNP complex, at least composed of DAZAP1, IGF2BP3-A, STAU and VgRBP60. Binds to the 3'-UTR of Vg1 mRNA. Interacts with profilin, a protein involved in actin assembly. Interacts with VgRBP71. As to expression, expressed in oocytes.

The protein localises to the cytoplasm. In terms of biological role, RNA-binding protein, which is required during gametogenesis. May be involved in the actin-dependent anchoring of Vg1 mRNA in the vegetal cortex of the oocyte. This Xenopus laevis (African clawed frog) protein is DAZ-associated protein 1 (dazap1).